We begin with the raw amino-acid sequence, 336 residues long: Dihydroorotate dehydrogenase (quinone) (336 aa).

Residues 62-66 (AGLDK) and Thr86 each bind FMN. Lys66 provides a ligand contact to substrate. Position 111–115 (111–115 (NRMGF)) interacts with substrate. FMN-binding residues include Asn139 and Asn172. Position 172 (Asn172) interacts with substrate. Ser175 (nucleophile) is an active-site residue. Asn177 serves as a coordination point for substrate. Positions 217 and 245 each coordinate FMN. 246 to 247 (NT) provides a ligand contact to substrate. FMN-binding positions include Gly268, Gly297, and 318–319 (YS).

Belongs to the dihydroorotate dehydrogenase family. Type 2 subfamily. Monomer. It depends on FMN as a cofactor.

The protein localises to the cell membrane. It carries out the reaction (S)-dihydroorotate + a quinone = orotate + a quinol. It functions in the pathway pyrimidine metabolism; UMP biosynthesis via de novo pathway; orotate from (S)-dihydroorotate (quinone route): step 1/1. Functionally, catalyzes the conversion of dihydroorotate to orotate with quinone as electron acceptor. The sequence is that of Dihydroorotate dehydrogenase (quinone) from Hamiltonella defensa subsp. Acyrthosiphon pisum (strain 5AT).